Reading from the N-terminus, the 200-residue chain is MADESNKVAAEVRDSFGKGAARKIRAAGKIPAVIYGHGSEPVHITLPAHQVGLLLRKANAVLDIDIAGKTQLALVKDVQKDPVLQIIEHLDLLVVRRGEKVQVEVPVHVEGEPFSGTIAMLDIPTIKLEVEATNIPERIVIDVTGAEEGTQYHAKDFALPAGAVLAEDEDLLLLNIIVPAAARAEDEEAVVEAAGDQAAE.

It belongs to the bacterial ribosomal protein bL25 family. CTC subfamily. In terms of assembly, part of the 50S ribosomal subunit; part of the 5S rRNA/L5/L18/L25 subcomplex. Contacts the 5S rRNA. Binds to the 5S rRNA independently of L5 and L18.

Functionally, this is one of the proteins that binds to the 5S RNA in the ribosome where it forms part of the central protuberance. The protein is Large ribosomal subunit protein bL25 of Leifsonia xyli subsp. xyli (strain CTCB07).